We begin with the raw amino-acid sequence, 252 residues long: Adenosine 5'-phosphosulfate reductase (252 aa).

Positions 125, 126, 208, and 211 each coordinate [4Fe-4S] cluster. Residues 219–252 are disordered; it reads DGYSREGRWSDRDKTECGLHTSPEDEDGAHAAES. Basic and acidic residues predominate over residues 221 to 235; the sequence is YSREGRWSDRDKTEC. The active-site Nucleophile; cysteine thiosulfonate intermediate is the Cys235.

Belongs to the PAPS reductase family. CysH subfamily. It depends on [4Fe-4S] cluster as a cofactor.

The protein resides in the cytoplasm. The enzyme catalyses [thioredoxin]-disulfide + sulfite + AMP + 2 H(+) = adenosine 5'-phosphosulfate + [thioredoxin]-dithiol. The protein operates within sulfur metabolism; hydrogen sulfide biosynthesis; sulfite from sulfate. Functionally, catalyzes the formation of sulfite from adenosine 5'-phosphosulfate (APS) using thioredoxin as an electron donor. The polypeptide is Adenosine 5'-phosphosulfate reductase (Salinibacter ruber (strain DSM 13855 / M31)).